The primary structure comprises 389 residues: Lipid-A-disaccharide synthase (389 aa).

It belongs to the LpxB family.

The enzyme catalyses a lipid X + a UDP-2-N,3-O-bis[(3R)-3-hydroxyacyl]-alpha-D-glucosamine = a lipid A disaccharide + UDP + H(+). The protein operates within bacterial outer membrane biogenesis; LPS lipid A biosynthesis. In terms of biological role, condensation of UDP-2,3-diacylglucosamine and 2,3-diacylglucosamine-1-phosphate to form lipid A disaccharide, a precursor of lipid A, a phosphorylated glycolipid that anchors the lipopolysaccharide to the outer membrane of the cell. This chain is Lipid-A-disaccharide synthase, found in Burkholderia cenocepacia (strain ATCC BAA-245 / DSM 16553 / LMG 16656 / NCTC 13227 / J2315 / CF5610) (Burkholderia cepacia (strain J2315)).